Reading from the N-terminus, the 261-residue chain is 3'-5' ssDNA/RNA exonuclease TatD (261 aa).

Residues Glu-92, His-128, and His-153 each coordinate a divalent metal cation.

The protein belongs to the metallo-dependent hydrolases superfamily. TatD-type hydrolase family. TatD subfamily. In terms of assembly, monomer. It depends on Mg(2+) as a cofactor.

It is found in the cytoplasm. 3'-5' exonuclease that prefers single-stranded DNA and RNA. May play a role in the H(2)O(2)-induced DNA damage repair. The protein is 3'-5' ssDNA/RNA exonuclease TatD of Erwinia billingiae (strain Eb661).